A 224-amino-acid polypeptide reads, in one-letter code: Urease accessory protein UreF (224 aa).

It belongs to the UreF family. UreD, UreF and UreG form a complex that acts as a GTP-hydrolysis-dependent molecular chaperone, activating the urease apoprotein by helping to assemble the nickel containing metallocenter of UreC. The UreE protein probably delivers the nickel.

Its subcellular location is the cytoplasm. Its function is as follows. Required for maturation of urease via the functional incorporation of the urease nickel metallocenter. This is Urease accessory protein UreF from Pseudomonas fluorescens (strain Pf0-1).